We begin with the raw amino-acid sequence, 309 residues long: tRNA uridine(34) hydroxylase (309 aa).

Residues 129 to 223 (SEPGTIVIDT…YLEEVPAEQS (95 aa)) enclose the Rhodanese domain. Cys-183 acts as the Cysteine persulfide intermediate in catalysis. The segment at 288–309 (YAERQRQVELAQARGKRPHIGS) is disordered.

The protein belongs to the TrhO family.

It catalyses the reaction uridine(34) in tRNA + AH2 + O2 = 5-hydroxyuridine(34) in tRNA + A + H2O. Catalyzes oxygen-dependent 5-hydroxyuridine (ho5U) modification at position 34 in tRNAs. The polypeptide is tRNA uridine(34) hydroxylase (Mesorhizobium japonicum (strain LMG 29417 / CECT 9101 / MAFF 303099) (Mesorhizobium loti (strain MAFF 303099))).